Reading from the N-terminus, the 114-residue chain is Iron-sulfur cluster insertion protein ErpA (114 aa).

Iron-sulfur cluster contacts are provided by C42, C106, and C108.

This sequence belongs to the HesB/IscA family. In terms of assembly, homodimer. Iron-sulfur cluster is required as a cofactor.

Its function is as follows. Required for insertion of 4Fe-4S clusters for at least IspG. The polypeptide is Iron-sulfur cluster insertion protein ErpA (Haemophilus influenzae (strain PittEE)).